We begin with the raw amino-acid sequence, 366 residues long: Chorismate synthase (366 aa).

Arginine 48 and arginine 54 together coordinate NADP(+). Residues 125-127 (RSS), 238-239 (NA), glycine 278, 293-297 (KPTSS), and arginine 319 contribute to the FMN site.

Belongs to the chorismate synthase family. Homotetramer. FMNH2 serves as cofactor.

It carries out the reaction 5-O-(1-carboxyvinyl)-3-phosphoshikimate = chorismate + phosphate. It participates in metabolic intermediate biosynthesis; chorismate biosynthesis; chorismate from D-erythrose 4-phosphate and phosphoenolpyruvate: step 7/7. Functionally, catalyzes the anti-1,4-elimination of the C-3 phosphate and the C-6 proR hydrogen from 5-enolpyruvylshikimate-3-phosphate (EPSP) to yield chorismate, which is the branch point compound that serves as the starting substrate for the three terminal pathways of aromatic amino acid biosynthesis. This reaction introduces a second double bond into the aromatic ring system. The sequence is that of Chorismate synthase from Paraburkholderia phymatum (strain DSM 17167 / CIP 108236 / LMG 21445 / STM815) (Burkholderia phymatum).